The following is an 84-amino-acid chain: Kappa-conotoxin-like Im11.3 (84 aa).

The N-terminal stretch at 1 to 26 is a signal peptide; sequence MMFRLTSVSCFLLVIACLNLFQVVLT. Cystine bridges form between cysteine 29/cysteine 43, cysteine 36/cysteine 48, cysteine 42/cysteine 51, and cysteine 47/cysteine 64. The propeptide occupies 71-84; that stretch reads LRPSHPLFLLLPAR.

This sequence belongs to the conotoxin I2 superfamily. In terms of tissue distribution, expressed by the venom duct.

Its subcellular location is the secreted. Its function is as follows. Inhibits the vertebrate voltage-gated potassium channels Kv1.1/KCNA1 and Kv1.3/KCNA3. The chain is Kappa-conotoxin-like Im11.3 from Conus imperialis (Imperial cone).